A 221-amino-acid chain; its full sequence is ATP phosphoribosyltransferase (221 aa).

The protein belongs to the ATP phosphoribosyltransferase family. Short subfamily. As to quaternary structure, heteromultimer composed of HisG and HisZ subunits.

The protein localises to the cytoplasm. The enzyme catalyses 1-(5-phospho-beta-D-ribosyl)-ATP + diphosphate = 5-phospho-alpha-D-ribose 1-diphosphate + ATP. It functions in the pathway amino-acid biosynthesis; L-histidine biosynthesis; L-histidine from 5-phospho-alpha-D-ribose 1-diphosphate: step 1/9. In terms of biological role, catalyzes the condensation of ATP and 5-phosphoribose 1-diphosphate to form N'-(5'-phosphoribosyl)-ATP (PR-ATP). Has a crucial role in the pathway because the rate of histidine biosynthesis seems to be controlled primarily by regulation of HisG enzymatic activity. The protein is ATP phosphoribosyltransferase of Symbiobacterium thermophilum (strain DSM 24528 / JCM 14929 / IAM 14863 / T).